The primary structure comprises 261 residues: Acyl-[acyl-carrier-protein]--UDP-N-acetylglucosamine O-acyltransferase (261 aa).

Belongs to the transferase hexapeptide repeat family. LpxA subfamily. Homotrimer.

The protein resides in the cytoplasm. It carries out the reaction a (3R)-hydroxyacyl-[ACP] + UDP-N-acetyl-alpha-D-glucosamine = a UDP-3-O-[(3R)-3-hydroxyacyl]-N-acetyl-alpha-D-glucosamine + holo-[ACP]. Its pathway is glycolipid biosynthesis; lipid IV(A) biosynthesis; lipid IV(A) from (3R)-3-hydroxytetradecanoyl-[acyl-carrier-protein] and UDP-N-acetyl-alpha-D-glucosamine: step 1/6. In terms of biological role, involved in the biosynthesis of lipid A, a phosphorylated glycolipid that anchors the lipopolysaccharide to the outer membrane of the cell. This chain is Acyl-[acyl-carrier-protein]--UDP-N-acetylglucosamine O-acyltransferase, found in Paracoccus denitrificans (strain Pd 1222).